The primary structure comprises 185 residues: Imidazoleglycerol-phosphate dehydratase (185 aa).

Belongs to the imidazoleglycerol-phosphate dehydratase family.

Its subcellular location is the cytoplasm. It carries out the reaction D-erythro-1-(imidazol-4-yl)glycerol 3-phosphate = 3-(imidazol-4-yl)-2-oxopropyl phosphate + H2O. It participates in amino-acid biosynthesis; L-histidine biosynthesis; L-histidine from 5-phospho-alpha-D-ribose 1-diphosphate: step 6/9. The chain is Imidazoleglycerol-phosphate dehydratase from Pyrobaculum arsenaticum (strain DSM 13514 / JCM 11321 / PZ6).